The sequence spans 880 residues: Alanine--tRNA ligase (880 aa).

Residues His568, His572, Cys670, and His674 each contribute to the Zn(2+) site.

It belongs to the class-II aminoacyl-tRNA synthetase family. It depends on Zn(2+) as a cofactor.

The protein resides in the cytoplasm. The catalysed reaction is tRNA(Ala) + L-alanine + ATP = L-alanyl-tRNA(Ala) + AMP + diphosphate. In terms of biological role, catalyzes the attachment of alanine to tRNA(Ala) in a two-step reaction: alanine is first activated by ATP to form Ala-AMP and then transferred to the acceptor end of tRNA(Ala). Also edits incorrectly charged Ser-tRNA(Ala) and Gly-tRNA(Ala) via its editing domain. The chain is Alanine--tRNA ligase from Exiguobacterium sibiricum (strain DSM 17290 / CCUG 55495 / CIP 109462 / JCM 13490 / 255-15).